We begin with the raw amino-acid sequence, 35 residues long: UPF0387 membrane protein YohO (35 aa).

The helical transmembrane segment at 6 to 26 threads the bilayer; sequence IGVIALFLFMALGGIGGVMLA.

It belongs to the UPF0387 family.

Its subcellular location is the cell inner membrane. This Shigella boydii serotype 4 (strain Sb227) protein is UPF0387 membrane protein YohO.